Reading from the N-terminus, the 153-residue chain is Transcriptional repressor NrdR (153 aa).

The segment at 3-34 (CPYCGHPDTRVVDSRPSDEGMAIRRRRECPSC) is a zinc-finger region. In terms of domain architecture, ATP-cone spans 49–136 (LMVVKRDGRK…VYREFDSVER (88 aa)).

The protein belongs to the NrdR family. It depends on Zn(2+) as a cofactor.

Its function is as follows. Negatively regulates transcription of bacterial ribonucleotide reductase nrd genes and operons by binding to NrdR-boxes. The chain is Transcriptional repressor NrdR from Thermus thermophilus (strain ATCC BAA-163 / DSM 7039 / HB27).